The sequence spans 253 residues: MTEPGQTTHFGYRDVPLQDKQTLVNDVFHSVASRYDLMNDLMSGGMHRLWKDVMITTLNPPRDDQPFRLLDVAGGTGDISFRAAKASGAGFQATVCDINTDMLEVGRQRAVERHLDGQVEFVEGNAEALQFPDKSYDAYTIAFGIRNVPRIDLALKEAHRVLKPGSRFLCLEFSSVDVPGLAKIYDLFSFKVIPQIGRVVTGDAESYQYLVESIRKFPKPADFGEMMREAGFARVNWQVLSGGIVALHSGWRL.

S-adenosyl-L-methionine contacts are provided by residues T76, D97, and 125–126 (NA).

The protein belongs to the class I-like SAM-binding methyltransferase superfamily. MenG/UbiE family.

The enzyme catalyses a 2-demethylmenaquinol + S-adenosyl-L-methionine = a menaquinol + S-adenosyl-L-homocysteine + H(+). It carries out the reaction a 2-methoxy-6-(all-trans-polyprenyl)benzene-1,4-diol + S-adenosyl-L-methionine = a 5-methoxy-2-methyl-3-(all-trans-polyprenyl)benzene-1,4-diol + S-adenosyl-L-homocysteine + H(+). The protein operates within quinol/quinone metabolism; menaquinone biosynthesis; menaquinol from 1,4-dihydroxy-2-naphthoate: step 2/2. Its pathway is cofactor biosynthesis; ubiquinone biosynthesis. Functionally, methyltransferase required for the conversion of demethylmenaquinol (DMKH2) to menaquinol (MKH2) and the conversion of 2-polyprenyl-6-methoxy-1,4-benzoquinol (DDMQH2) to 2-polyprenyl-3-methyl-6-methoxy-1,4-benzoquinol (DMQH2). The sequence is that of Ubiquinone/menaquinone biosynthesis C-methyltransferase UbiE from Rhodopseudomonas palustris (strain HaA2).